A 353-amino-acid chain; its full sequence is F-box protein At2g14290 (353 aa).

One can recognise an F-box domain in the interval 6–58 (PRTWSELPPDLLGSIFHRLSFTDFHRAKIVCWNWNLSSKLTVPKKIRSPWLML).

The chain is F-box protein At2g14290 from Arabidopsis thaliana (Mouse-ear cress).